Here is an 815-residue protein sequence, read N- to C-terminus: Protein SMAX1-LIKE 3 (815 aa).

The region spanning 8 to 171 (VEQALTADAA…TKVEQAVSLE (164 aa)) is the Clp R domain. 2 repeat regions span residues 12–80 (LTAD…LNRL) and 99–171 (ISNA…VSLE). The disordered stretch occupies residues 750-769 (SRACSPPSNQKSDGSDQPED). Residues 778-782 (LDLNL) carry the EAR motif.

Belongs to the ClpA/ClpB family. As to quaternary structure, interacts probably with TPL/TPR in an EAR-motif dependent manner. Expressed in roots and seedlings.

May function in a transcriptional corepressor complex. The polypeptide is Protein SMAX1-LIKE 3 (Arabidopsis thaliana (Mouse-ear cress)).